Consider the following 568-residue polypeptide: Sphingosine-1-phosphate lyase 1 (568 aa).

The Lumenal segment spans residues Met1–Trp40. The chain crosses the membrane as a helical; Signal-anchor for type III membrane protein span at residues Gln41 to Phe61. The Cytoplasmic segment spans residues Gln62–His568. Lys353 is modified (N6-(pyridoxal phosphate)lysine; alternate). Lys353 carries the N6-acetyllysine; alternate modification. Tyr356 and Tyr366 each carry 3'-nitrotyrosine. The residue at position 564 (Ser564) is a Phosphoserine.

This sequence belongs to the group II decarboxylase family. Sphingosine-1-phosphate lyase subfamily. As to quaternary structure, homodimer. Requires pyridoxal 5'-phosphate as cofactor. As to expression, ubiquitously expressed. Expressed in fetal and adult adrenal gland (at protein level).

It is found in the endoplasmic reticulum membrane. It carries out the reaction sphinganine 1-phosphate = hexadecanal + phosphoethanolamine. The enzyme catalyses sphing-4-enine 1-phosphate = (2E)-hexadecenal + phosphoethanolamine. Its pathway is lipid metabolism; sphingolipid metabolism. Its function is as follows. Cleaves phosphorylated sphingoid bases (PSBs), such as sphingosine-1-phosphate, into fatty aldehydes and phosphoethanolamine. Elevates stress-induced ceramide production and apoptosis. Required for global lipid homeostasis in liver and cholesterol homeostasis in fibroblasts. Involved in the regulation of pro-inflammatory response and neutrophil trafficking. Modulates neuronal autophagy via phosphoethanolamine production which regulates accumulation of aggregate-prone proteins such as APP. Seems to play a role in establishing neuronal contact sites and axonal maintenance. The polypeptide is Sphingosine-1-phosphate lyase 1 (Homo sapiens (Human)).